A 135-amino-acid chain; its full sequence is Large ribosomal subunit protein uL16c (135 aa).

Methionine 1 carries the N-methylmethionine modification.

In terms of assembly, component of the chloroplast large ribosomal subunit (LSU). Mature 70S chloroplast ribosomes of higher plants consist of a small (30S) and a large (50S) subunit. The 30S small subunit contains 1 molecule of ribosomal RNA (16S rRNA) and 24 different proteins. The 50S large subunit contains 3 rRNA molecules (23S, 5S and 4.5S rRNA) and 33 different proteins. Partially alpha-N-monomethylated at Met-1 (10%), whereas 90% of it is blocked to Edman degradation, probably by trimethylation.

It localises to the plastid. Its subcellular location is the chloroplast. Functionally, component of the chloroplast ribosome (chloro-ribosome), a dedicated translation machinery responsible for the synthesis of chloroplast genome-encoded proteins, including proteins of the transcription and translation machinery and components of the photosynthetic apparatus. The chain is Large ribosomal subunit protein uL16c from Spinacia oleracea (Spinach).